Consider the following 160-residue polypeptide: Heat shock protein beta-6 (160 aa).

An involved in stabilization of the HSPB1:HSBP6 heterodimer region spans residues 1–72 (MEIPVPVQPS…PVAQVPTDPG (72 aa)). Phosphoserine; by PKA is present on serine 16. Residues 55 to 160 (LRAPSVALPV…AQAPPPAAAK (106 aa)) enclose the sHSP domain. Residue glutamine 66 is modified to Deamidated glutamine.

This sequence belongs to the small heat shock protein (HSP20) family. As to quaternary structure, homodimer. Small heat shock proteins form high molecular mass oligomers containing variable number of monomers; these oligomers display a very flexible quaternary structure easily exchanging their subunits. Heterooligomer with HSPB1; formed through oligomerization of HSPB1:HSBP6 dimers; subunit exchange leads to formation of at least two different heterooligomeric complexes, differing in variable quantities of HSPB1 and HSPB6 homodimers in addition to HSPB1:HSPB6 heterodimers. Heterooligomer with CRYAB; large heterooligomers consist of CRYAB homodimers and HSPB5:HSPB6 heterodimers but lacking HSPB6 homodimers. Interacts with BAG3. Interacts (phosphorylated) with YWHAZ. Interacts with PDE4A and PDE4D; required for maintenance of the non-phosphorylated state of HSPB6 under basal conditions. Interacts with KDR. Interacts with PRKD1. Post-translationally, the N-terminus is blocked. Phosphorylated at Ser-16 by PKA and probably PKD1K; required to protect cardiomyocytes from apoptosis.

It localises to the cytoplasm. The protein localises to the nucleus. The protein resides in the secreted. Its function is as follows. Small heat shock protein which functions as a molecular chaperone probably maintaining denatured proteins in a folding-competent state. Seems to have versatile functions in various biological processes. Plays a role in regulating muscle function such as smooth muscle vasorelaxation and cardiac myocyte contractility. May regulate myocardial angiogenesis implicating KDR. Overexpression mediates cardioprotection and angiogenesis after induced damage. Stabilizes monomeric YWHAZ thereby supporting YWHAZ chaperone-like activity. This is Heat shock protein beta-6 (HSPB6) from Homo sapiens (Human).